The primary structure comprises 376 residues: Alcohol dehydrogenase class-3 (376 aa).

Zn(2+) is bound by residues cysteine 40, histidine 62, cysteine 92, cysteine 95, cysteine 98, cysteine 106, and cysteine 170.

The protein belongs to the zinc-containing alcohol dehydrogenase family. Class-III subfamily. In terms of assembly, homodimer. Zn(2+) serves as cofactor.

Its subcellular location is the cytoplasm. It carries out the reaction a primary alcohol + NAD(+) = an aldehyde + NADH + H(+). The catalysed reaction is a secondary alcohol + NAD(+) = a ketone + NADH + H(+). The enzyme catalyses S-(hydroxymethyl)glutathione + NADP(+) = S-formylglutathione + NADPH + H(+). It catalyses the reaction S-(hydroxymethyl)glutathione + NAD(+) = S-formylglutathione + NADH + H(+). Functionally, oxidizes long-chain aliphatic alcohols, long-chain hydroxylated fatty acids and S-hydroxymethylglutathione (hmGSH) in increasing order of preference. Shows little or no activity with short-chain aliphatic alcohols. This Cereibacter sphaeroides (strain ATCC 17023 / DSM 158 / JCM 6121 / CCUG 31486 / LMG 2827 / NBRC 12203 / NCIMB 8253 / ATH 2.4.1.) (Rhodobacter sphaeroides) protein is Alcohol dehydrogenase class-3 (adhI).